A 428-amino-acid polypeptide reads, in one-letter code: Stromal membrane-associated protein 2 (428 aa).

The Arf-GAP domain occupies 13–139; the sequence is QAVLANLLLE…INVLRKEKDD (127 aa). The C4-type zinc finger occupies 28 to 51; that stretch reads CADCQSKGPRWASWNIGVFICIRC. A phosphoserine mark is found at Ser127, Ser219, Ser224, Ser230, and Ser239. Positions 163-231 are interaction with clathrin heavy chains; it reads MPQKKEDAQL…SVSRKAVGSM (69 aa). The interval 218 to 262 is disordered; that stretch reads PSPSSVSRKAVGSMPTAGSAGSVPENLNLFPEPGSKSEETGKKQL. Over residues 252–262 the composition is skewed to basic and acidic residues; the sequence is SKSEETGKKQL. The tract at residues 339–428 is interaction with PICALM; that stretch reads MGGMQASMMG…NQTLSPQMWK (90 aa).

In terms of assembly, interacts with ARF1. Interacts with PICALM and clathrin heavy chains.

It is found in the cytoplasm. GTPase activating protein that acts on ARF1. Can also activate ARF6 (in vitro). May play a role in clathrin-dependent retrograde transport from early endosomes to the trans-Golgi network. In Mus musculus (Mouse), this protein is Stromal membrane-associated protein 2 (Smap2).